The following is a 250-amino-acid chain: 5-oxoprolinase subunit A (250 aa).

The protein belongs to the LamB/PxpA family. As to quaternary structure, forms a complex composed of PxpA, PxpB and PxpC.

It carries out the reaction 5-oxo-L-proline + ATP + 2 H2O = L-glutamate + ADP + phosphate + H(+). Functionally, catalyzes the cleavage of 5-oxoproline to form L-glutamate coupled to the hydrolysis of ATP to ADP and inorganic phosphate. This Streptomyces avermitilis (strain ATCC 31267 / DSM 46492 / JCM 5070 / NBRC 14893 / NCIMB 12804 / NRRL 8165 / MA-4680) protein is 5-oxoprolinase subunit A.